A 128-amino-acid polypeptide reads, in one-letter code: L-ectoine synthase (128 aa).

This sequence belongs to the ectoine synthase family.

It catalyses the reaction (2S)-4-acetamido-2-aminobutanoate = L-ectoine + H2O. It functions in the pathway amine and polyamine biosynthesis; ectoine biosynthesis; L-ectoine from L-aspartate 4-semialdehyde: step 3/3. In terms of biological role, catalyzes the circularization of gamma-N-acetyl-alpha,gamma-diaminobutyric acid (ADABA) to ectoine (1,4,5,6-tetrahydro-2-methyl-4-pyrimidine carboxylic acid), which is an excellent osmoprotectant. The sequence is that of L-ectoine synthase from Aliivibrio fischeri (strain ATCC 700601 / ES114) (Vibrio fischeri).